The chain runs to 1111 residues: Phytochrome C (1111 aa).

The region spanning 213-393 (NMLLLCDALV…VFGVQINKEA (181 aa)) is the GAF domain. Residue Cys318 coordinates phytochromobilin. 2 consecutive PAS domains span residues 604 to 674 (IVNE…LEGS) and 737 to 808 (DYAR…TKLR). A Histidine kinase domain is found at 889 to 1111 (YLRHEVKDPE…FVILTEFPLI (223 aa)).

It belongs to the phytochrome family. As to quaternary structure, homodimer. Post-translationally, contains one covalently linked phytochromobilin chromophore.

In terms of biological role, regulatory photoreceptor which exists in two forms that are reversibly interconvertible by light: the Pr form that absorbs maximally in the red region of the spectrum and the Pfr form that absorbs maximally in the far-red region. Photoconversion of Pr to Pfr induces an array of morphogenic responses, whereas reconversion of Pfr to Pr cancels the induction of those responses. Pfr controls the expression of a number of nuclear genes including those encoding the small subunit of ribulose-bisphosphate carboxylase, chlorophyll A/B binding protein, protochlorophyllide reductase, rRNA, etc. It also controls the expression of its own gene(s) in a negative feedback fashion. In Arabidopsis thaliana (Mouse-ear cress), this protein is Phytochrome C (PHYC).